The primary structure comprises 649 residues: WEB family protein At5g55860 (649 aa).

Coiled-coil stretches lie at residues 59-227 (EKVL…ACSQ), 267-356 (EFAK…IESV), and 391-461 (TINQ…MSEK). The span at 443-453 (EAKAAETKALE) shows a compositional bias: basic and acidic residues. The disordered stretch occupies residues 443-483 (EAKAAETKALEQIKSMSEKTNAARNSTSSESGSQSITLSQE). Over residues 456–467 (KSMSEKTNAARN) the composition is skewed to polar residues. The span at 468-482 (STSSESGSQSITLSQ) shows a compositional bias: low complexity. The stretch at 505 to 549 (AALAQVEAVRASENETLKKLETTQEEIKKLKTATEEALKKAAMAD) forms a coiled coil. Residues 583-611 (MKMASESSPQQHYKAPKQKPVNNKLEKTK) form a disordered region.

The protein belongs to the WEB family.

This Arabidopsis thaliana (Mouse-ear cress) protein is WEB family protein At5g55860.